The chain runs to 31 residues: Relaxin B chain (31 aa).

Residue Gln1 is modified to Pyrrolidone carboxylic acid.

It belongs to the insulin family. As to quaternary structure, heterodimer of a B chain and an A chain linked by two disulfide bonds.

Its subcellular location is the secreted. Functionally, relaxin is an ovarian hormone that acts with estrogen to produce dilatation of the birth canal in many mammals. This chain is Relaxin B chain, found in Phocoenoides dalli dalli (Dall's porpoise).